The following is a 463-amino-acid chain: Dipeptidyl peptidase 1 (463 aa).

The first 24 residues, 1–24 (MGVGPASLLAALLLLLSGDRAVRC), serve as a signal peptide directing secretion. N-linked (GlcNAc...) asparagine glycans are attached at residues N29, N53, and N119. Cystine bridges form between C30–C118, C54–C136, C255–C298, C291–C331, and C321–C337. The propeptide occupies 135–230 (ACFTGKKVGT…TAEIQQKILH (96 aa)). Residue C258 is part of the active site. N-linked (GlcNAc...) asparagine glycosylation occurs at N276. Residues F302 and Y304 each coordinate chloride. Y347 contacts chloride. Active-site residues include H405 and N427.

This sequence belongs to the peptidase C1 family. Tetramer of heterotrimers consisting of exclusion domain, heavy- and light chains. Chloride is required as a cofactor.

The protein localises to the lysosome. It carries out the reaction Release of an N-terminal dipeptide, Xaa-Yaa-|-Zaa-, except when Xaa is Arg or Lys, or Yaa or Zaa is Pro.. In terms of biological role, thiol protease. Has dipeptidylpeptidase activity. Active against a broad range of dipeptide substrates composed of both polar and hydrophobic amino acids. Proline cannot occupy the P1 position and arginine cannot occupy the P2 position of the substrate. Can act as both an exopeptidase and endopeptidase. Activates serine proteases such as elastase, cathepsin G and granzymes A and B. The chain is Dipeptidyl peptidase 1 (CTSC) from Macaca fascicularis (Crab-eating macaque).